The following is a 533-amino-acid chain: Zinc finger protein 26 (533 aa).

Residues 14 to 85 form the KRAB domain; the sequence is LSFKDISMEF…NAKISRQSCP (72 aa). 13 C2H2-type zinc fingers span residues 174–196, 202–224, 230–252, 258–280, 286–308, 314–336, 342–364, 370–392, 398–420, 426–448, 454–476, 482–504, and 510–532; these read CVCS…LRIH, YECS…QRVH, YSCS…QEIH, YGCS…QRSH, YECS…QRTH, HKCS…IRMH, YQCS…QGVH, YQCG…LRAH, YGCS…RRTH, YECN…QKTH, FKCS…QRVH, and WKCS…RKTH.

Belongs to the krueppel C2H2-type zinc-finger protein family.

The protein resides in the nucleus. Functionally, may be involved in transcriptional regulation. This Homo sapiens (Human) protein is Zinc finger protein 26 (ZNF26).